Reading from the N-terminus, the 378-residue chain is Stimulator of interferon genes protein (378 aa).

The Cytoplasmic portion of the chain corresponds to 1–17 (MPYSSLHPSIPQPRGLR). Positions 1-190 (MPYSSLHPSI…AYNQRHKNVL (190 aa)) are mediates interaction with ZDHHC1 and ZDHHC11. A helical transmembrane segment spans residues 18–34 (AQVAALVLLGACLVALW). At 35 to 44 (GLGELPEYTL) the chain is on the lumenal side. The chain crosses the membrane as a helical span at residues 45–69 (RWLVLHLASQQIGLLVKGLCSLAEE). The Cytoplasmic segment spans residues 70–91 (LCHVHSRYQSSYWRAARACLGC). Residues C88 and C91 are each lipidated (S-palmitoyl cysteine). Residues 92–106 (PIRCGALLLLSCYFY) traverse the membrane as a helical segment. Residues 107 to 116 (FSIRDKAGLP) lie on the Lumenal side of the membrane. Residues 117-134 (LPWMLALLGLSQALNILL) form a helical membrane-spanning segment. Residues 135–378 (GLQHLAPAEV…QPLPLRSDIF (244 aa)) lie on the Cytoplasmic side of the membrane. K150 is covalently cross-linked (Glycyl lysine isopeptide (Lys-Gly) (interchain with G-Cter in ubiquitin)). The segment at 153–339 (FNVAHGLAWS…LRHLRQEERE (187 aa)) is cyclic dinucleotide-binding domain (CBD). S162 and Y167 together coordinate 2',3'-cGAMP. 3',3'-c-di-GMP-binding residues include S162 and Y167. Position 167 (Y167) interacts with 2',3'-cUAMP. K236 participates in a covalent cross-link: Glycyl lysine isopeptide (Lys-Gly) (interchain with G-Cter in ubiquitin). Positions 238 and 263 each coordinate 2',3'-cGAMP. The 2',3'-cUAMP site is built by R238 and T263. 3',3'-c-di-GMP is bound by residues 238-241 (RVYT) and T263. A C-terminal tail (CTT) region spans residues 339-378 (EVTMGSAETSVVPTSSTLSQEPELLISGMEQPLPLRSDIF). S354 carries the post-translational modification Phosphoserine. T355 is subject to Phosphothreonine. A phosphoserine; by TBK1 mark is found at S357 and S365. Positions 362–365 (LLIS) match the pLxIS motif motif.

This sequence belongs to the STING family. As to quaternary structure, homodimer; forms a homodimer in absence of cyclic nucleotide (c-di-GMP or cGAMP); 'Lys-63'-linked ubiquitination at Lys-150 is required for homodimerization. Homotetramer; in presence of cyclic nucleotide (c-di-GMP or cGAMP), forms tetramers and higher-order oligomers through side-by-side packing. Interacts (when phosphorylated) with IRF3; following activation and phosphorylation on the pLxIS motif by TBK1, recruits IRF3. Interacts with DDX58/RIG-I, MAVS and SSR2. Interacts with RNF5 and TRIM56. Interacts with TBK1; when homodimer, leading to subsequent production of IFN-beta. Interacts with IFIT1 and IFIT2. Interacts with TRIM29; this interaction induces STING1 ubiquitination and subsequent degradation. Associates with the MHC-II complex. Interacts with STEEP1; interaction takes place upon cGAMP-activation and STING1 phosphorylation by MAP3K7/TAK1 and promotes STING1 translocation to COPII vesicles. Interacts with SEC24A, SEC24B and SEC24C; promoting translocation to COPII vesicles. Interacts (when ubiquitinated) with SQSTM1; leading to relocalization to autophagosomes. Interacts with SURF4. Interacts with HNRNPA2B1. Interacts with ZDHHC1; ZDHHC1 constitutively interacts with STING1 and in presence of DNA viruses activates it by promoting its cGAMP-induced oligomerization and the recruitment of downstream signaling components. Interacts with ZDHHC11; in presence of DNA viruses promotes the recruitment of IRF3 to STING1. Interacts with TOMM70. Interacts with TAB1; promoting recruitment of TAB1 to the endoplasmic reticulum membrane and subsequent activation of MAP3K7/TAK1. Interacts (via transmembrane domain) with TMEM203. Interacts with DDX41. (Microbial infection) Interacts with African swine fever virus/ASFV protein A528R; this interaction mediates STING1 degradation. In terms of assembly, (Microbial infection) Interacts with African swine fever virus/ASFV minor capsid protein p17. As to quaternary structure, (Microbial infection) Interacts with Pseudorabies virus protein UL13; this interaction mediates STING1 degradation in a RNF5-dependent manner. In terms of processing, phosphorylation by TBK1 leads to activation and production of IFN-beta. Following cyclic nucleotide (c-di-GMP or cGAMP)-binding, activation and translocation from the endoplasmic reticulum, STING1 is phosphorylated by TBK1 at Ser-365 in the pLxIS motif. The phosphorylated pLxIS motif constitutes an IRF3-binding motif, leading to recruitment of the transcription factor IRF3 to induce type-I interferons and other cytokines. Phosphorylated on tyrosine residues upon MHC-II aggregation. Dephosphorylation by PPP6C leads to inactivation and decreased production of IFN-beta. Phosphorylation at Ser-357 is also required to activate IRF3. Phosphorylation at Ser-354 by MAP3K7/TAK1 facilitates its interaction with STEEP1, promoting STING1 translocation to COPII vesicles. Post-translationally, ubiquitinated. Ubiquitinated via 'Lys-63'-linked ubiquitin chains in response to double-stranded DNA treatment, leading to relocalization to autophagosomes and subsequent degradation; this process is dependent on SQSTM1. 'Lys-63'-linked ubiquitination mediated by TRIM56 at Lys-150 promotes homodimerization and recruitment of the antiviral kinase TBK1 and subsequent production of IFN-beta. 'Lys-48'-linked polyubiquitination at Lys-150 occurring after viral infection is mediated by RNF5 and leads to proteasomal degradation. 'Lys-11'-linked polyubiquitination at Lys-150 by RNF26 leads to stabilize STING1: it protects STING1 from RNF5-mediated 'Lys-48'-linked polyubiquitination. 'Lys-33'-linked and 'Lys-48'-linked deubiquitinated by USP20; leading to its stabilization and promotion of innate antiviral response. 'Lys-48'-linked deubiquitinated by USP44; leading to its stabilization and promotion of innate antiviral response. Deubiquitinated by USP13; leading to inhibition of innate antiviral response. 'Lys-63'-linked deubiquitinated by USP49; leading to inhibition of the subsequent recruitment of TBK1 to the signaling complex. 'Lys-63'-linked ubiquitination mediated by RNF39 promotes the activation of the cGAS-STING pathway. Palmitoylation takes place in the Golgi apparatus and creates a platform for the recruitment of TBK1. In terms of tissue distribution, expressed at higher level in the spleen, lymph node, lung and bone marrow, followed by the small intestine, heart, liver and brain, and to a lesser extent in the stomach and kidney.

The protein resides in the endoplasmic reticulum membrane. It is found in the cytoplasm. The protein localises to the perinuclear region. It localises to the endoplasmic reticulum-Golgi intermediate compartment membrane. Its subcellular location is the golgi apparatus membrane. The protein resides in the cytoplasmic vesicle. It is found in the autophagosome membrane. The protein localises to the mitochondrion outer membrane. It localises to the cell membrane. The enzyme catalyses H(+)(in) = H(+)(out). Functionally, facilitator of innate immune signaling that acts as a sensor of cytosolic DNA from bacteria and viruses and promotes the production of type I interferon (IFN-alpha and IFN-beta). Innate immune response is triggered in response to non-CpG double-stranded DNA from viruses and bacteria delivered to the cytoplasm. Acts by binding cyclic dinucleotides: recognizes and binds cyclic di-GMP (c-di-GMP), a second messenger produced by bacteria, cyclic UMP-AMP (2',3'-cUAMP), and cyclic GMP-AMP (cGAMP), a messenger produced by CGAS in response to DNA virus in the cytosol. Upon binding to c-di-GMP, cUAMP or cGAMP, STING1 oligomerizes, translocates from the endoplasmic reticulum and is phosphorylated by TBK1 on the pLxIS motif, leading to recruitment and subsequent activation of the transcription factor IRF3 to induce expression of type I interferon and exert a potent anti-viral state. Exhibits 2',3' phosphodiester linkage-specific ligand recognition: can bind both 2'-3' linked cGAMP (2'-3'-cGAMP) and 3'-3' linked cGAMP but is preferentially activated by 2'-3' linked cGAMP. The preference for 2'-3'-cGAMP, compared to other linkage isomers is probably due to the ligand itself, whichs adopts an organized free-ligand conformation that resembles the STING1-bound conformation and pays low energy costs in changing into the active conformation. In addition to promote the production of type I interferons, plays a direct role in autophagy. Following cGAMP-binding, STING1 buds from the endoplasmic reticulum into COPII vesicles, which then form the endoplasmic reticulum-Golgi intermediate compartment (ERGIC). The ERGIC serves as the membrane source for WIPI2 recruitment and LC3 lipidation, leading to formation of autophagosomes that target cytosolic DNA or DNA viruses for degradation by the lysosome. Promotes autophagy by acting as a proton channel that directs proton efflux from the Golgi to facilitate MAP1LC3B/LC3B lipidation. The autophagy- and interferon-inducing activities can be uncoupled and autophagy induction is independent of TBK1 phosphorylation. Autophagy is also triggered upon infection by bacteria: following c-di-GMP-binding, which is produced by live Gram-positive bacteria, promotes reticulophagy. May be involved in translocon function, the translocon possibly being able to influence the induction of type I interferons. May be involved in transduction of apoptotic signals via its association with the major histocompatibility complex class II (MHC-II). The protein is Stimulator of interferon genes protein of Sus scrofa (Pig).